The sequence spans 426 residues: Serine--tRNA ligase (426 aa).

The interval arginine 37–alanine 63 is disordered. An L-serine-binding site is contributed by threonine 233–glutamate 235. ATP is bound at residue arginine 264–glutamate 266. An L-serine-binding site is contributed by glutamate 287. Glutamate 351 to serine 354 serves as a coordination point for ATP. Position 387 (serine 387) interacts with L-serine.

It belongs to the class-II aminoacyl-tRNA synthetase family. Type-1 seryl-tRNA synthetase subfamily. As to quaternary structure, homodimer. The tRNA molecule binds across the dimer.

It is found in the cytoplasm. It carries out the reaction tRNA(Ser) + L-serine + ATP = L-seryl-tRNA(Ser) + AMP + diphosphate + H(+). The catalysed reaction is tRNA(Sec) + L-serine + ATP = L-seryl-tRNA(Sec) + AMP + diphosphate + H(+). Its pathway is aminoacyl-tRNA biosynthesis; selenocysteinyl-tRNA(Sec) biosynthesis; L-seryl-tRNA(Sec) from L-serine and tRNA(Sec): step 1/1. In terms of biological role, catalyzes the attachment of serine to tRNA(Ser). Is also able to aminoacylate tRNA(Sec) with serine, to form the misacylated tRNA L-seryl-tRNA(Sec), which will be further converted into selenocysteinyl-tRNA(Sec). This is Serine--tRNA ligase from Pseudomonas entomophila (strain L48).